A 268-amino-acid polypeptide reads, in one-letter code: Tryptophan synthase alpha chain (268 aa).

Active-site proton acceptor residues include Glu49 and Asp60.

The protein belongs to the TrpA family. Tetramer of two alpha and two beta chains.

It carries out the reaction (1S,2R)-1-C-(indol-3-yl)glycerol 3-phosphate + L-serine = D-glyceraldehyde 3-phosphate + L-tryptophan + H2O. It functions in the pathway amino-acid biosynthesis; L-tryptophan biosynthesis; L-tryptophan from chorismate: step 5/5. Its function is as follows. The alpha subunit is responsible for the aldol cleavage of indoleglycerol phosphate to indole and glyceraldehyde 3-phosphate. The chain is Tryptophan synthase alpha chain from Vibrio parahaemolyticus serotype O3:K6 (strain RIMD 2210633).